The following is a 33-amino-acid chain: Gaegurin-1 (33 aa).

A disulfide bond links C27 and C33.

This sequence belongs to the frog skin active peptide (FSAP) family. Brevinin subfamily. Monomer. In terms of tissue distribution, expressed by the skin glands.

The protein localises to the secreted. In terms of biological role, has a non-hemolytic activity. Has a broad spectrum of activity against both Gram-positive and Gram-negative bacteria, fungi and protozoa. This is Gaegurin-1 (GGN1) from Glandirana rugosa (Japanese wrinkled frog).